Here is a 150-residue protein sequence, read N- to C-terminus: Catabolic 3-dehydroquinase 1 (150 aa).

Y24 serves as the catalytic Proton acceptor. 3 residues coordinate substrate: N75, H81, and D88. Residue H101 is the Proton donor of the active site. Substrate-binding positions include 102–103 (VS) and R112.

Belongs to the type-II 3-dehydroquinase family. Homododecamer. Adopts a ring-like structure, composed of an arrangement of two hexameric rings stacked on top of one another.

The enzyme catalyses 3-dehydroquinate = 3-dehydroshikimate + H2O. The protein operates within aromatic compound metabolism; 3,4-dihydroxybenzoate biosynthesis; 3,4-dihydroxybenzoate from 3-dehydroquinate: step 1/2. In terms of biological role, is involved in the catabolism of quinate. Allows the utilization of quinate as carbon source via the beta-ketoadipate pathway. In Aspergillus fumigatus (strain ATCC MYA-4609 / CBS 101355 / FGSC A1100 / Af293) (Neosartorya fumigata), this protein is Catabolic 3-dehydroquinase 1.